The sequence spans 346 residues: tRNA N6-adenosine threonylcarbamoyltransferase (346 aa).

The Fe cation site is built by His-117 and His-121. Substrate is bound by residues Gln-139–Gly-143, Asp-172, Gly-185, Asp-189, and Asn-278. Asp-308 contacts Fe cation.

The protein belongs to the KAE1 / TsaD family. It depends on Fe(2+) as a cofactor.

It localises to the cytoplasm. The enzyme catalyses L-threonylcarbamoyladenylate + adenosine(37) in tRNA = N(6)-L-threonylcarbamoyladenosine(37) in tRNA + AMP + H(+). Its function is as follows. Required for the formation of a threonylcarbamoyl group on adenosine at position 37 (t(6)A37) in tRNAs that read codons beginning with adenine. Is involved in the transfer of the threonylcarbamoyl moiety of threonylcarbamoyl-AMP (TC-AMP) to the N6 group of A37, together with TsaE and TsaB. TsaD likely plays a direct catalytic role in this reaction. This is tRNA N6-adenosine threonylcarbamoyltransferase from Lactobacillus delbrueckii subsp. bulgaricus (strain ATCC 11842 / DSM 20081 / BCRC 10696 / JCM 1002 / NBRC 13953 / NCIMB 11778 / NCTC 12712 / WDCM 00102 / Lb 14).